The sequence spans 197 residues: Outer membrane protein 26 (197 aa).

The signal sequence occupies residues 1–23; that stretch reads MKNIAKVTALALGIALASGYASA.

Belongs to the Skp family.

Its subcellular location is the cell outer membrane. This is Outer membrane protein 26 (omp26) from Haemophilus influenzae (strain ATCC 51907 / DSM 11121 / KW20 / Rd).